Reading from the N-terminus, the 209-residue chain is Thymidylate kinase (209 aa).

10-17 contacts ATP; sequence GIDGCGKS.

It belongs to the thymidylate kinase family.

The enzyme catalyses dTMP + ATP = dTDP + ADP. Phosphorylation of dTMP to form dTDP in both de novo and salvage pathways of dTTP synthesis. This chain is Thymidylate kinase, found in Synechococcus sp. (strain CC9902).